Consider the following 561-residue polypeptide: MACPF domain-containing protein CAD1 (561 aa).

The region spanning 11 to 314 (VPSSEALTTT…PPIEDLQYFL (304 aa)) is the MACPF domain. The segment at 489 to 514 (VASSGRLEPGGPSTSSSTEEVSGQSG) is disordered. The segment covering 500 to 513 (PSTSSSTEEVSGQS) has biased composition (polar residues).

The protein belongs to the complement C6/C7/C8/C9 (TC 1.C.39) family. As to expression, mainly expressed in the vascular system.

Its function is as follows. Negatively controls the salicylic acid (SA)-mediated pathway of programmed cell death in plant immunity. The sequence is that of MACPF domain-containing protein CAD1 (CAD1) from Arabidopsis thaliana (Mouse-ear cress).